A 252-amino-acid chain; its full sequence is uncharacterized protein (252 aa).

Positions 1-23 (MKLLKTVPAIVMLAGGMFASLNA) are cleaved as a signal peptide. The interval 231-252 (EPPESAPEHTDRRTTLSLGYSM) is disordered.

This is an uncharacterized protein from Escherichia coli (strain K12).